The following is a 1201-amino-acid chain: DNA-directed RNA polymerase subunit beta' (1201 aa).

Cys60, Cys62, Cys75, and Cys78 together coordinate Zn(2+). Asp449, Asp451, and Asp453 together coordinate Mg(2+). Zn(2+) contacts are provided by Cys818, Cys892, Cys899, and Cys902.

Belongs to the RNA polymerase beta' chain family. As to quaternary structure, the RNAP catalytic core consists of 2 alpha, 1 beta, 1 beta' and 1 omega subunit. When a sigma factor is associated with the core the holoenzyme is formed, which can initiate transcription. Mg(2+) is required as a cofactor. Requires Zn(2+) as cofactor.

It carries out the reaction RNA(n) + a ribonucleoside 5'-triphosphate = RNA(n+1) + diphosphate. Its function is as follows. DNA-dependent RNA polymerase catalyzes the transcription of DNA into RNA using the four ribonucleoside triphosphates as substrates. This Listeria welshimeri serovar 6b (strain ATCC 35897 / DSM 20650 / CCUG 15529 / CIP 8149 / NCTC 11857 / SLCC 5334 / V8) protein is DNA-directed RNA polymerase subunit beta'.